The primary structure comprises 878 residues: Leucine--tRNA ligase (878 aa).

The short motif at 43–53 (PYPSGRIHIGH) is the 'HIGH' region element. The 'KMSKS' region signature appears at 630–634 (KMSKS). An ATP-binding site is contributed by Lys633.

Belongs to the class-I aminoacyl-tRNA synthetase family.

It is found in the cytoplasm. It carries out the reaction tRNA(Leu) + L-leucine + ATP = L-leucyl-tRNA(Leu) + AMP + diphosphate. This Nitrobacter hamburgensis (strain DSM 10229 / NCIMB 13809 / X14) protein is Leucine--tRNA ligase.